Reading from the N-terminus, the 156-residue chain is Ribonuclease H (156 aa).

The 142-residue stretch at 3–144 (ELKQIRIYTD…CDTLAREAAE (142 aa)) folds into the RNase H type-1 domain. Mg(2+)-binding residues include D12, E50, D72, and D136.

It belongs to the RNase H family. In terms of assembly, monomer. Requires Mg(2+) as cofactor.

It localises to the cytoplasm. The enzyme catalyses Endonucleolytic cleavage to 5'-phosphomonoester.. Endonuclease that specifically degrades the RNA of RNA-DNA hybrids. The chain is Ribonuclease H from Shewanella amazonensis (strain ATCC BAA-1098 / SB2B).